The following is a 328-amino-acid chain: Mitochondrial thiamine pyrophosphate carrier 1 (328 aa).

Solcar repeat units lie at residues 12–110 (GTRR…TTQL), 120–208 (PQPI…LRPV), and 221–316 (PPGS…ALKL). The next 6 helical transmembrane spans lie at 17 to 37 (VVLAGGIAGLISRFCIAPLDV), 79 to 99 (LTGLWKGNIPAELLYVCYGGI), 126 to 146 (FISGALGGGIATAATYPLDLL), 185 to 205 (SAAVGQIVPYMGLFFATYEAL), 227 to 247 (AAAGIVASVLAKTGVFPLDLV), and 291 to 308 (GLTVSLVKAAPASAVTMW).

Belongs to the mitochondrial carrier (TC 2.A.29) family.

The protein resides in the mitochondrion inner membrane. Its function is as follows. Mitochondrial transporter that mediates uptake of thiamine pyrophosphate (ThPP) into mitochondria. This Emericella nidulans (strain FGSC A4 / ATCC 38163 / CBS 112.46 / NRRL 194 / M139) (Aspergillus nidulans) protein is Mitochondrial thiamine pyrophosphate carrier 1 (tpc1).